The following is a 193-amino-acid chain: Xanthine phosphoribosyltransferase (193 aa).

The xanthine site is built by Leu-20 and Thr-27. Ala-128 to Ala-132 provides a ligand contact to 5-phospho-alpha-D-ribose 1-diphosphate. A xanthine-binding site is contributed by Lys-156.

Belongs to the purine/pyrimidine phosphoribosyltransferase family. Xpt subfamily. In terms of assembly, homodimer.

It localises to the cytoplasm. It catalyses the reaction XMP + diphosphate = xanthine + 5-phospho-alpha-D-ribose 1-diphosphate. The protein operates within purine metabolism; XMP biosynthesis via salvage pathway; XMP from xanthine: step 1/1. In terms of biological role, converts the preformed base xanthine, a product of nucleic acid breakdown, to xanthosine 5'-monophosphate (XMP), so it can be reused for RNA or DNA synthesis. This is Xanthine phosphoribosyltransferase from Streptococcus pneumoniae serotype 2 (strain D39 / NCTC 7466).